Here is a 301-residue protein sequence, read N- to C-terminus: GTPase Era (301 aa).

The Era-type G domain maps to 8 to 174 (KSGFVALVGR…LKTLKDYLPE (167 aa)). The interval 16-23 (GRPNVGKS) is G1. A GTP-binding site is contributed by 16–23 (GRPNVGKS). Positions 42–46 (QTTRN) are G2. The interval 63-66 (DTPG) is G3. GTP is bound by residues 63-67 (DTPGI) and 124-127 (NKID). The interval 124–127 (NKID) is G4. Residues 153 to 155 (ISA) are G5. Positions 197 to 282 (IREQILRLTD…NLKLWVKVRR (86 aa)) constitute a KH type-2 domain.

Belongs to the TRAFAC class TrmE-Era-EngA-EngB-Septin-like GTPase superfamily. Era GTPase family. As to quaternary structure, monomer.

The protein localises to the cytoplasm. It localises to the cell membrane. Functionally, an essential GTPase that binds both GDP and GTP, with rapid nucleotide exchange. Plays a role in 16S rRNA processing and 30S ribosomal subunit biogenesis and possibly also in cell cycle regulation and energy metabolism. The sequence is that of GTPase Era from Lactobacillus delbrueckii subsp. bulgaricus (strain ATCC 11842 / DSM 20081 / BCRC 10696 / JCM 1002 / NBRC 13953 / NCIMB 11778 / NCTC 12712 / WDCM 00102 / Lb 14).